Here is a 603-residue protein sequence, read N- to C-terminus: uncharacterized protein (603 aa).

Over residues 496–513 (EEEDQEEDDTSDDDDQEK) the composition is skewed to acidic residues. Disordered regions lie at residues 496 to 536 (EEED…GSLE) and 549 to 568 (AVAE…DTAQ). The segment covering 517-533 (NPQNNIGSLTRTPSSPG) has biased composition (polar residues).

This sequence belongs to the herpesviridae US22 family.

This is an uncharacterized protein from Human cytomegalovirus (strain AD169) (HHV-5).